Consider the following 427-residue polypeptide: GTPase ERA-like, chloroplastic (427 aa).

Residues 1 to 39 (MAVSPHISPTLSRYKFFSTSVVENPNFSPYRIYSRRRVT) constitute a chloroplast transit peptide. Residues 128–298 (RSGYVAVVGM…KEWILSKLPF (171 aa)) form the Era-type G domain. The interval 136 to 143 (GMPNVGKS) is G1. GTP is bound at residue 136–143 (GMPNVGKS). The tract at residues 162-166 (QTTRH) is G2. The segment at 183–186 (DTPG) is G3. Residues 183–187 (DTPGV) and 248–251 (NKKD) each bind GTP. Residues 248-251 (NKKD) are G4. Residues 277-279 (VSA) form a G5 region. Positions 329-406 (YRNEVPYACQ…FLEVEVKVKE (78 aa)) constitute a KH type-2 domain.

It belongs to the TRAFAC class TrmE-Era-EngA-EngB-Septin-like GTPase superfamily. Era GTPase family.

The protein resides in the plastid. It is found in the chloroplast stroma. Its subcellular location is the chloroplast nucleoid. Nuclear genome-encoded probable GTPase involved in ribosome biogenesis in chloroplasts. Plays a role in 16S rRNA maturation in plastids and may contribute to the assembly of the small (30S) ribosomal subunit. The protein is GTPase ERA-like, chloroplastic of Arabidopsis thaliana (Mouse-ear cress).